The chain runs to 72 residues: Translation initiation factor IF-1 (72 aa).

One can recognise an S1-like domain in the interval 1–72 (MAKDDVIEID…DKGRITFRYK (72 aa)).

This sequence belongs to the IF-1 family. In terms of assembly, component of the 30S ribosomal translation pre-initiation complex which assembles on the 30S ribosome in the order IF-2 and IF-3, IF-1 and N-formylmethionyl-tRNA(fMet); mRNA recruitment can occur at any time during PIC assembly.

It localises to the cytoplasm. One of the essential components for the initiation of protein synthesis. Stabilizes the binding of IF-2 and IF-3 on the 30S subunit to which N-formylmethionyl-tRNA(fMet) subsequently binds. Helps modulate mRNA selection, yielding the 30S pre-initiation complex (PIC). Upon addition of the 50S ribosomal subunit IF-1, IF-2 and IF-3 are released leaving the mature 70S translation initiation complex. This Sulfurovum sp. (strain NBC37-1) protein is Translation initiation factor IF-1.